The primary structure comprises 425 residues: Probable sucrose-phosphatase 3a (425 aa).

Belongs to the sucrose phosphatase family. Homodimer. Mg(2+) serves as cofactor.

The enzyme catalyses sucrose 6(F)-phosphate + H2O = sucrose + phosphate. The protein operates within glycan biosynthesis; sucrose biosynthesis; sucrose from D-fructose 6-phosphate and UDP-alpha-D-glucose: step 2/2. Catalyzes the final step of sucrose synthesis. In Arabidopsis thaliana (Mouse-ear cress), this protein is Probable sucrose-phosphatase 3a (SPP3A).